An 80-amino-acid chain; its full sequence is ALSLATPRRDNINALVDYLKNPTSYDGLDSIAEIHPSIKSADIYPRMRSLTDDDLYAIAGHIMLQPKVVSEKWGGGKIYF.

Met47 provides a ligand contact to heme.

The protein belongs to the cytochrome c family. PsbV subfamily. PSII is composed of 1 copy each of membrane proteins PsbA, PsbB, PsbC, PsbD, PsbE, PsbF, PsbH, PsbI, PsbJ, PsbK, PsbL, PsbM, PsbT, PsbY, PsbZ, Psb30/Ycf12, at least 3 peripheral proteins of the oxygen-evolving complex and a large number of cofactors. It forms dimeric complexes. Heme serves as cofactor.

It is found in the plastid. The protein resides in the chloroplast thylakoid membrane. Its function is as follows. One of the extrinsic, lumenal subunits of photosystem II (PSII). PSII is a light-driven water plastoquinone oxidoreductase, using light energy to abstract electrons from H(2)O, generating a proton gradient subsequently used for ATP formation. The extrinsic proteins stabilize the structure of photosystem II oxygen-evolving complex (OEC), the ion environment of oxygen evolution and protect the OEC against heat-induced inactivation. The polypeptide is Photosystem II extrinsic protein V (Thalassiosira weissflogii (Marine diatom)).